Here is a 472-residue protein sequence, read N- to C-terminus: Peptidoglycan endopeptidase RipA (472 aa).

Residues 1–39 (MRRNRRGSPARPAARFVRPAIPSALSVALLVCTPGLATA) constitute a signal peptide (tat-type signal). A NlpC/P60 domain is found at 340–472 (RQASEYVIRR…TPYVVRYIEY (133 aa)). The Nucleophile role is filled by Cys-383. His-432 (proton acceptor) is an active-site residue. Glu-444 is a catalytic residue.

Belongs to the peptidase C40 family. Monomer. Interacts with RpfB and PBP1A (ponA1) via residues 448-472 of RipA, interacts with RpfE. Interacts with the chaperone MoxR1. RipA-MoxR1 interaction in the cytoplasm leads to proper folding of RipA, resulting in its secretion. Also interacts with Mce2B. Exported by the Tat system. The position of the signal peptide cleavage has not been experimentally proven.

Its subcellular location is the secreted. Its activity is regulated as follows. MoxR1-mediated folding is critical for secretion via the TAT system. The synergistic effects on peptidoglycan degradation of RipA plus RpfB are inhibited by addition of PBP1A (ponA1). Its function is as follows. Peptidoglycan endopeptidase that cleaves the bond between D-glutamate and meso-diaminopimelate. Binds and degrades high-molecular weight peptidoglycan from a number of Actinobacteria; activity is increased in the presence of RpfB and inhibited by PBP1A (ponA1). Required for normal separation of daughter cells after cell division and for cell wall integrity. Required for host cell invasion and intracellular survival in host macrophages. This Mycobacterium tuberculosis (strain ATCC 25618 / H37Rv) protein is Peptidoglycan endopeptidase RipA (ripA).